The following is a 309-amino-acid chain: Shugoshin (309 aa).

Positions 42–77 (NLLLKQQVVQCTKTIEKLRNENVALRQKNQELIDGT) form a coiled coil. Disordered stretches follow at residues 165–195 (FDNN…KGRR) and 210–309 (EEAS…NTFF). Residues 167-178 (NNSSQSTSSIQN) show a composition bias toward low complexity. Basic residues predominate over residues 184-193 (PRKKQSVGKG).

It belongs to the shugoshin family. As to expression, expressed in gonads.

It localises to the nucleus. The protein localises to the chromosome. Its subcellular location is the centromere. Functionally, component of cell cycle checkpoints, which ensures chromosome segregation during meiosis and mitosis. During meiotic prophase, it is involved in the regulation of the synapsis checkpoint, which monitors whether homologous chromosomes have synapsed, and the DNA damage response. Plays a central role in chromosome cohesion during cell division by preventing premature dissociation of cohesin complex after prophase, when most of cohesin complex dissociates from chromosomes arms. The polypeptide is Shugoshin (Caenorhabditis elegans).